The sequence spans 291 residues: Small ribosomal subunit protein uS2 (291 aa).

The segment at 255-291 (AGAATGEWSEAQGAQWETGTGAPAADWAAEPAKESSW) is disordered.

It belongs to the universal ribosomal protein uS2 family. In terms of assembly, component of the small ribosomal subunit. Mature ribosomes consist of a small (40S) and a large (60S) subunit. The 40S subunit contains about 33 different proteins and 1 molecule of RNA (18S). The 60S subunit contains about 49 different proteins and 3 molecules of RNA (25S, 5.8S and 5S). Interacts with RPS21.

The protein localises to the cytoplasm. Its function is as follows. Required for the assembly and/or stability of the 40S ribosomal subunit. Required for the processing of the 20S rRNA-precursor to mature 18S rRNA in a late step of the maturation of 40S ribosomal subunits. This chain is Small ribosomal subunit protein uS2, found in Podospora anserina (strain S / ATCC MYA-4624 / DSM 980 / FGSC 10383) (Pleurage anserina).